We begin with the raw amino-acid sequence, 418 residues long: PP2A regulatory subunit TAP46 (418 aa).

A disordered region spans residues Lys367–Gly418. Basic and acidic residues-rich tracts occupy residues Trp376–Gln385 and Glu393–Pro406.

Belongs to the IGBP1/TAP42 family.

Its function is as follows. Involved in the regulation of the TOR signaling pathway. Seems to act as a regulator of PP2A catalytic activity. The sequence is that of PP2A regulatory subunit TAP46 from Oryza sativa subsp. japonica (Rice).